The chain runs to 494 residues: Guanosine-5'-triphosphate,3'-diphosphate pyrophosphatase (494 aa).

Belongs to the GppA/Ppx family. GppA subfamily.

It catalyses the reaction guanosine 3'-diphosphate 5'-triphosphate + H2O = guanosine 3',5'-bis(diphosphate) + phosphate + H(+). It participates in purine metabolism; ppGpp biosynthesis; ppGpp from GTP: step 2/2. In terms of biological role, catalyzes the conversion of pppGpp to ppGpp. Guanosine pentaphosphate (pppGpp) is a cytoplasmic signaling molecule which together with ppGpp controls the 'stringent response', an adaptive process that allows bacteria to respond to amino acid starvation, resulting in the coordinated regulation of numerous cellular activities. This Cronobacter sakazakii (strain ATCC BAA-894) (Enterobacter sakazakii) protein is Guanosine-5'-triphosphate,3'-diphosphate pyrophosphatase.